We begin with the raw amino-acid sequence, 173 residues long: Chromophore lyase CpcS/CpeS 3 (173 aa).

This sequence belongs to the CpcS/CpeS biliprotein lyase family.

Functionally, covalently attaches a chromophore to Cys residue(s) of phycobiliproteins. The sequence is that of Chromophore lyase CpcS/CpeS 3 from Trichodesmium erythraeum (strain IMS101).